The following is a 495-amino-acid chain: Phosphomethylpyrimidine synthase (495 aa).

Residues asparagine 125, methionine 154, tyrosine 183, histidine 219, 239–241 (SRG), 280–283 (DGLR), and glutamate 319 each bind substrate. Histidine 323 serves as a coordination point for Zn(2+). Tyrosine 346 is a substrate binding site. Residue histidine 387 participates in Zn(2+) binding. Positions 467, 470, and 475 each coordinate [4Fe-4S] cluster.

The protein belongs to the ThiC family. [4Fe-4S] cluster is required as a cofactor.

The enzyme catalyses 5-amino-1-(5-phospho-beta-D-ribosyl)imidazole + S-adenosyl-L-methionine = 4-amino-2-methyl-5-(phosphooxymethyl)pyrimidine + CO + 5'-deoxyadenosine + formate + L-methionine + 3 H(+). It functions in the pathway cofactor biosynthesis; thiamine diphosphate biosynthesis. Functionally, catalyzes the synthesis of the hydroxymethylpyrimidine phosphate (HMP-P) moiety of thiamine from aminoimidazole ribotide (AIR) in a radical S-adenosyl-L-methionine (SAM)-dependent reaction. This is Phosphomethylpyrimidine synthase from Leptospira interrogans serogroup Icterohaemorrhagiae serovar Lai (strain 56601).